The sequence spans 493 residues: Glycosyltransferase alg8 (493 aa).

Helical transmembrane passes span 13 to 32 (GWLF…PTSI), 47 to 69 (VGIW…LYIV), 380 to 402 (LTVA…LLWI), and 422 to 444 (PAYP…YVFF).

It belongs to the glycosyltransferase 2 family.

The protein resides in the cell membrane. It functions in the pathway glycan biosynthesis; alginate biosynthesis. Possibly a processive enzyme that polymerizes GDP-mannuronic acid. The protein is Glycosyltransferase alg8 (alg8) of Pseudomonas syringae pv. tomato (strain ATCC BAA-871 / DC3000).